A 97-amino-acid chain; its full sequence is Putative ankyrin repeat protein RBE_0357 (97 aa).

An ANK repeat occupies 24 to 54 (YGKTALHYAYTKRNIDIIKILLKCPGIKICI).

This chain is Putative ankyrin repeat protein RBE_0357, found in Rickettsia bellii (strain RML369-C).